The sequence spans 230 residues: Large ribosomal subunit protein uL1 (230 aa).

The protein belongs to the universal ribosomal protein uL1 family. Part of the 50S ribosomal subunit.

Its function is as follows. Binds directly to 23S rRNA. The L1 stalk is quite mobile in the ribosome, and is involved in E site tRNA release. Protein L1 is also a translational repressor protein, it controls the translation of the L11 operon by binding to its mRNA. The polypeptide is Large ribosomal subunit protein uL1 (Paramagnetospirillum magneticum (strain ATCC 700264 / AMB-1) (Magnetospirillum magneticum)).